We begin with the raw amino-acid sequence, 160 residues long: Putative UPF0479 protein YIL177W-A (160 aa).

2 helical membrane passes run 39 to 59 (IVFC…KVLQ) and 136 to 156 (VPMI…ISQH).

It belongs to the UPF0479 family.

Its subcellular location is the membrane. This is Putative UPF0479 protein YIL177W-A from Saccharomyces cerevisiae (strain ATCC 204508 / S288c) (Baker's yeast).